The chain runs to 203 residues: Protein-L-isoaspartate O-methyltransferase (203 aa).

The active site involves S50.

This sequence belongs to the methyltransferase superfamily. L-isoaspartyl/D-aspartyl protein methyltransferase family.

It is found in the cytoplasm. The enzyme catalyses [protein]-L-isoaspartate + S-adenosyl-L-methionine = [protein]-L-isoaspartate alpha-methyl ester + S-adenosyl-L-homocysteine. In terms of biological role, catalyzes the methyl esterification of L-isoaspartyl residues in peptides and proteins that result from spontaneous decomposition of normal L-aspartyl and L-asparaginyl residues. It plays a role in the repair and/or degradation of damaged proteins. In Methanococcoides burtonii (strain DSM 6242 / NBRC 107633 / OCM 468 / ACE-M), this protein is Protein-L-isoaspartate O-methyltransferase.